Reading from the N-terminus, the 58-residue chain is Ribulose bisphosphate carboxylase large chain (58 aa).

The propeptide occupies 1–2; it reads MS. P3 is modified (N-acetylproline). Position 14 is an N6,N6,N6-trimethyllysine (K14).

Belongs to the RuBisCO large chain family. Type I subfamily. In terms of assembly, heterohexadecamer of 8 large chains and 8 small chains.

The protein resides in the plastid. It is found in the chloroplast. The enzyme catalyses 2 (2R)-3-phosphoglycerate + 2 H(+) = D-ribulose 1,5-bisphosphate + CO2 + H2O. The catalysed reaction is D-ribulose 1,5-bisphosphate + O2 = 2-phosphoglycolate + (2R)-3-phosphoglycerate + 2 H(+). RuBisCO catalyzes two reactions: the carboxylation of D-ribulose 1,5-bisphosphate, the primary event in carbon dioxide fixation, as well as the oxidative fragmentation of the pentose substrate in the photorespiration process. Both reactions occur simultaneously and in competition at the same active site. The chain is Ribulose bisphosphate carboxylase large chain (rbcL) from Euphorbia characias (Albanian spurge).